A 444-amino-acid polypeptide reads, in one-letter code: C4-dicarboxylate transport protein (444 aa).

A run of 8 helical transmembrane segments spans residues 19-39 (HLYF…HFYP), 55-75 (LVKM…IAGM), 90-110 (IYFL…SNIL), 161-181 (ILQV…VGDL), 199-219 (LVAI…AFTI), 230-250 (LAFL…VVLG), 343-363 (LLLV…AGFI), and 366-386 (AATL…ILGI).

Belongs to the dicarboxylate/amino acid:cation symporter (DAACS) (TC 2.A.23) family.

It is found in the cell inner membrane. Functionally, responsible for the transport of dicarboxylates such as succinate, fumarate, and malate from the periplasm across the membrane. This is C4-dicarboxylate transport protein from Allorhizobium ampelinum (strain ATCC BAA-846 / DSM 112012 / S4) (Agrobacterium vitis (strain S4)).